Consider the following 158-residue polypeptide: MSYTITDPSKLAYLSSAWADPNSLINLCTNSLGNQFQTQQARTTVQQQFADVWQPVPTLTSRFPAGAGYFRVYRYDPILDPLITFLMGTFDTRNRIIEVENPQNPTTTETLDATRRVDDATVAIRSAINNLLNELVRGTGMYNQVSFETMSGLTWTSS.

Serine 2 is subject to N-acetylserine; by host.

This sequence belongs to the virgaviridae capsid protein family.

The protein localises to the virion. Capsid protein self-assembles to form rod-shaped virions about 18 nm in diameter with a central canal enclosing the viral genomic RNA. The protein is Capsid protein (CP) of Odontoglossum ringspot virus (isolate Singapore 1) (ORSV).